The sequence spans 325 residues: MKVFDYEDIQLIPAKCIVRSRTECDPTVVLGEHRFKLPVVPANMQTIINEEIAEKLAEDGYFYIMHRFEPERRMDFVKKMKDKGLISSISVGVKDDEYALIDQLAEENLTPDYITIDVAHGHAQSVIDMIHYIKEKLPAAFVIAGNVGTQEGVRELENAGADATKVGIGPGKVCITKIKTGFGTGGWQLSALRWCAKVARKPLIADGGIRTHGDIAKSIRFGATMVMIGSLFAGHIESPGETKVEDGVKYKEYFGSASQYQKGEAKNVEGKKIWIHQRGHLRDTLQAMREDLQSSISYAGGRDLEAIRKVDYVIVKNSIFNGDVL.

The active-site Thioimidate intermediate is the Cys-174. 203-226 (LIADGGIRTHGDIAKSIRFGATMV) is an NADP(+) binding site.

This sequence belongs to the IMPDH/GMPR family. GuaC type 2 subfamily.

The enzyme catalyses IMP + NH4(+) + NADP(+) = GMP + NADPH + 2 H(+). Its function is as follows. Catalyzes the irreversible NADPH-dependent deamination of GMP to IMP. It functions in the conversion of nucleobase, nucleoside and nucleotide derivatives of G to A nucleotides, and in maintaining the intracellular balance of A and G nucleotides. In Pediococcus pentosaceus (strain ATCC 25745 / CCUG 21536 / LMG 10740 / 183-1w), this protein is GMP reductase.